A 348-amino-acid polypeptide reads, in one-letter code: UDP-glucose 4-epimerase (348 aa).

Residues 12-14 (GYI), 33-37 (DNFHN), 66-67 (DI), Phe-88, and Lys-92 contribute to the NAD(+) site. 132-134 (SAT) lines the substrate pocket. The active-site Proton acceptor is the Tyr-157. Lys-161 and Tyr-185 together coordinate NAD(+). Substrate-binding positions include 185-187 (YFN), 206-208 (NNL), 224-226 (NVF), Arg-239, and 300-303 (REGD).

The protein belongs to the NAD(P)-dependent epimerase/dehydratase family. Homodimer. The cofactor is NAD(+).

It catalyses the reaction UDP-alpha-D-glucose = UDP-alpha-D-galactose. The catalysed reaction is UDP-N-acetyl-alpha-D-glucosamine = UDP-N-acetyl-alpha-D-galactosamine. It participates in carbohydrate metabolism; galactose metabolism. In terms of biological role, catalyzes two distinct but analogous reactions: the reversible epimerization of UDP-glucose to UDP-galactose and the reversible epimerization of UDP-N-acetylglucosamine to UDP-N-acetylgalactosamine. The reaction with UDP-Gal plays a critical role in the Leloir pathway of galactose catabolism in which galactose is converted to the glycolytic intermediate glucose 6-phosphate. It contributes to the catabolism of dietary galactose and enables the endogenous biosynthesis of both UDP-Gal and UDP-GalNAc when exogenous sources are limited. Both UDP-sugar interconversions are important in the synthesis of glycoproteins and glycolipids. The polypeptide is UDP-glucose 4-epimerase (Homo sapiens (Human)).